A 407-amino-acid polypeptide reads, in one-letter code: uncharacterized protein (407 aa).

3 disordered regions span residues 1-64 (MSRK…EPFD), 110-276 (GFGP…YPQF), and 314-341 (QSRPRKSSHDRHKHHNKHKHHNGHHNNP). Residues 7–32 (KQSNPKRNYKNDNYFQENSYTMTNGF) are compositionally biased toward polar residues. Basic and acidic residues predominate over residues 33–44 (TKDKDGKPVEFK). Positions 122-137 (DSDSEYSDECLTDECS) are enriched in acidic residues. Composition is skewed to polar residues over residues 138–147 (DNYNKQSTDS) and 184–201 (NFDNTVPIPQNDTTNSQP). Positions 209 to 231 (SKSSSKSSKSNKSNKSSKSNKSS) are enriched in low complexity. Residues 232–246 (KSSKSKSNKHSKHKN) show a composition bias toward basic residues. Positions 247-258 (KSDSSSDSDEKT) are enriched in basic and acidic residues. Basic residues-rich tracts occupy residues 259-270 (HKHKDRRHRRGR) and 316-341 (RPRKSSHDRHKHHNKHKHHNGHHNNP).

This is an uncharacterized protein from Acanthamoeba polyphaga mimivirus (APMV).